Reading from the N-terminus, the 320-residue chain is Epoxidase atD (320 aa).

Residues asparagine 245 and asparagine 299 are each glycosylated (N-linked (GlcNAc...) asparagine).

The protein operates within secondary metabolite biosynthesis. Epoxidase; part of the gene cluster that mediates the biosynthesis of terreic acid, a quinone epoxide inhibitor of Bruton's tyrosine kinase. The first step of the pathway is the synthesis of 6-methylsalicylic acid (6-MSA) by the 6-methylsalicylic acid synthase atX. In the biosynthesis of 6-MSA, atX utilizes one acetyl-CoA and three malonyl-CoAs as its substrates and catalyzes a series of programmed reactions including Claisen condensation, reduction, aldol cyclization, and the hydrolytic cleavage that yields 6-MSA. The 6-methylsalicylate 1-monooxygenase atA then catalyzes the decarboxylative hydroxylation of 6-MSA to 3-methylcatechol. The next step is the conversion of 3-methylcatechol to 3-methyl-1,2,4-benzenetriol by cytochrome P450 monooxygenase atE, which is enhanced by cytochrome P450 monooxygenase atG. Then, the epoxidase atD catalyzes the epoxidation and hydroxyl oxidation of 3-methyl-1,2,4-benzenetriol to terremutin. Lastly, GMC oxidoreductase atC oxidizes terremutin to terreic acid. The chain is Epoxidase atD from Aspergillus terreus (strain NIH 2624 / FGSC A1156).